Here is a 916-residue protein sequence, read N- to C-terminus: Translation initiation factor IF-2 (916 aa).

A disordered region spans residues 1–325; that stretch reads MTDSNDDKTL…QEKFRRSQVQ (325 aa). Residues 60-91 show a composition bias toward low complexity; the sequence is ITPATPAAPVRAAEPAPAPAQARPQQSTPAPR. The span at 97 to 108 shows a compositional bias: polar residues; the sequence is GQANQRPQQSYQ. The span at 125-182 shows a compositional bias: basic and acidic residues; the sequence is SPEEMDARRRALAESQARDAQDAIRRAEEEKRRAAEEAVRKAAEAEEAARRAVEEAAR. 2 stretches are compositionally biased toward low complexity: residues 183–209 and 229–243; these read QAEAAAAAAAEPAVTAPAPAPVTAEAR and DGAAARPAPGAPAAV. The 168-residue stretch at 414–581 folds into the tr-type G domain; sequence SRPPVVTIMG…AVLLQAEILD (168 aa). The segment at 423-430 is G1; that stretch reads GHVDHGKT. 423-430 contacts GTP; that stretch reads GHVDHGKT. The G2 stretch occupies residues 448-452; the sequence is GITQH. The segment at 469–472 is G3; the sequence is DTPG. GTP is bound by residues 469-473 and 523-526; these read DTPGH and NKID. The interval 523–526 is G4; that stretch reads NKID. The G5 stretch occupies residues 559 to 561; it reads SAK.

Belongs to the TRAFAC class translation factor GTPase superfamily. Classic translation factor GTPase family. IF-2 subfamily.

Its subcellular location is the cytoplasm. In terms of biological role, one of the essential components for the initiation of protein synthesis. Protects formylmethionyl-tRNA from spontaneous hydrolysis and promotes its binding to the 30S ribosomal subunits. Also involved in the hydrolysis of GTP during the formation of the 70S ribosomal complex. The polypeptide is Translation initiation factor IF-2 (Rhizobium etli (strain ATCC 51251 / DSM 11541 / JCM 21823 / NBRC 15573 / CFN 42)).